Reading from the N-terminus, the 162-residue chain is NADH-quinone oxidoreductase subunit I (162 aa).

4Fe-4S ferredoxin-type domains are found at residues 53–83 (LRRY…IEAE) and 93–122 (TRYD…EGPN). [4Fe-4S] cluster contacts are provided by Cys-63, Cys-66, Cys-69, Cys-73, Cys-102, Cys-105, Cys-108, and Cys-112.

The protein belongs to the complex I 23 kDa subunit family. In terms of assembly, NDH-1 is composed of 14 different subunits. Subunits NuoA, H, J, K, L, M, N constitute the membrane sector of the complex. [4Fe-4S] cluster is required as a cofactor.

The protein resides in the cell inner membrane. The catalysed reaction is a quinone + NADH + 5 H(+)(in) = a quinol + NAD(+) + 4 H(+)(out). NDH-1 shuttles electrons from NADH, via FMN and iron-sulfur (Fe-S) centers, to quinones in the respiratory chain. The immediate electron acceptor for the enzyme in this species is believed to be ubiquinone. Couples the redox reaction to proton translocation (for every two electrons transferred, four hydrogen ions are translocated across the cytoplasmic membrane), and thus conserves the redox energy in a proton gradient. The protein is NADH-quinone oxidoreductase subunit I of Rhodospirillum centenum (strain ATCC 51521 / SW).